A 393-amino-acid chain; its full sequence is ATP phosphoribosyltransferase regulatory subunit (393 aa).

Belongs to the class-II aminoacyl-tRNA synthetase family. HisZ subfamily. As to quaternary structure, heteromultimer composed of HisG and HisZ subunits.

It localises to the cytoplasm. It functions in the pathway amino-acid biosynthesis; L-histidine biosynthesis; L-histidine from 5-phospho-alpha-D-ribose 1-diphosphate: step 1/9. Its function is as follows. Required for the first step of histidine biosynthesis. May allow the feedback regulation of ATP phosphoribosyltransferase activity by histidine. The chain is ATP phosphoribosyltransferase regulatory subunit from Chromohalobacter salexigens (strain ATCC BAA-138 / DSM 3043 / CIP 106854 / NCIMB 13768 / 1H11).